A 454-amino-acid chain; its full sequence is Chromosomal replication initiator protein DnaA (454 aa).

Positions 1–81 are domain I, interacts with DnaA modulators; it reads MNNSLWQQCA…PNVVLKVGEA (81 aa). The segment at 79–110 is disordered; the sequence is GEASPTQRDSGSPQRAAATRRKTPNFSSGNTD. Residues 81–117 form a domain II region; sequence ASPTQRDSGSPQRAAATRRKTPNFSSGNTDVEVPFES. The span at 82–91 shows a compositional bias: polar residues; it reads SPTQRDSGSP. Residues 118–334 form a domain III, AAA+ region region; it reads NIHPEYTFDN…GALNRVVANV (217 aa). Residues Gly162, Gly164, Lys165, and Thr166 each coordinate ATP. Residues 335–454 are domain IV, binds dsDNA; that stretch reads QLTGRPITID…YRNLIRTLSS (120 aa).

Belongs to the DnaA family. As to quaternary structure, oligomerizes as a right-handed, spiral filament on DNA at oriC.

It is found in the cytoplasm. Its function is as follows. Plays an essential role in the initiation and regulation of chromosomal replication. ATP-DnaA binds to the origin of replication (oriC) to initiate formation of the DNA replication initiation complex once per cell cycle. Binds the DnaA box (a 9 base pair repeat at the origin) and separates the double-stranded (ds)DNA. Forms a right-handed helical filament on oriC DNA; dsDNA binds to the exterior of the filament while single-stranded (ss)DNA is stabiized in the filament's interior. The ATP-DnaA-oriC complex binds and stabilizes one strand of the AT-rich DNA unwinding element (DUE), permitting loading of DNA polymerase. After initiation quickly degrades to an ADP-DnaA complex that is not apt for DNA replication. Binds acidic phospholipids. This Idiomarina loihiensis (strain ATCC BAA-735 / DSM 15497 / L2-TR) protein is Chromosomal replication initiator protein DnaA.